We begin with the raw amino-acid sequence, 123 residues long: SGSCTTKTCWTTLPKFREIGYILKEKYSEAVHVEAVRATRLRQPTFLKIKKPRTYRKPMVTDLVYIERSPNYCEEDSSTGSVGTQGRLCNRTSHHGDGCDLMCCGRGYNTHQYTKVWQCNCKF.

S1 carries the O-palmitoleoyl serine; by PORCN lipid modification. A disordered linker region spans residues 33–61; it reads VEAVRATRLRQPTFLKIKKPRTYRKPMVT. C89 and C104 are joined by a disulfide. Residue N90 is glycosylated (N-linked (GlcNAc...) asparagine).

It belongs to the Wnt family. In terms of processing, palmitoleoylation is required for efficient binding to frizzled receptors. Depalmitoleoylation leads to Wnt signaling pathway inhibition.

It localises to the secreted. Its subcellular location is the extracellular space. The protein resides in the extracellular matrix. Its function is as follows. Ligand for members of the frizzled family of seven transmembrane receptors that functions in the canonical Wnt/beta-catenin signaling pathway. Required for normal fusion of the chorion and the allantois during placenta development. Required for central nervous system (CNS) angiogenesis and blood-brain barrier regulation. The protein is Protein Wnt-7b (WNT-7B) of Alopias vulpinus (Common thresher shark).